A 428-amino-acid chain; its full sequence is Beta-1,3-galactosyl-O-glycosyl-glycoprotein beta-1,6-N-acetylglucosaminyltransferase 4 (428 aa).

Over 1–12 (MRRCAVLHRLRC) the chain is Cytoplasmic. The helical; Signal-anchor for type II membrane protein transmembrane segment at 13 to 30 (KFYVFVVSLFVVVKLVYL) threads the bilayer. Over 31–428 (KISMDNSIYI…QLQQCLRRVS (398 aa)) the chain is Lumenal. Residue N59 is glycosylated (N-linked (GlcNAc...) asparagine). Disulfide bonds link C60–C214, C148–C369, C169–C196, and C378–C410.

The protein belongs to the glycosyltransferase 14 family.

It localises to the golgi apparatus membrane. It carries out the reaction a 3-O-[beta-D-galactosyl-(1-&gt;3)-N-acetyl-alpha-D-galactosaminyl]-L-seryl-[protein] + UDP-N-acetyl-alpha-D-glucosamine = 3-O-{beta-D-galactosyl-(1-&gt;3)-[N-acetyl-beta-D-glucosaminyl-(1-&gt;6)]-N-acetyl-alpha-D-galactosaminyl}-L-seryl-[protein] + UDP + H(+). The enzyme catalyses a 3-O-[beta-D-galactosyl-(1-&gt;3)-N-acetyl-alpha-D-galactosaminyl]-L-threonyl-[protein] + UDP-N-acetyl-alpha-D-glucosamine = a 3-O-{beta-D-galactosyl-(1-&gt;3)-[N-acetyl-beta-D-glucosaminyl-(1-&gt;6)]-N-acetyl-alpha-D-galactosaminyl}-L-threonyl-[protein] + UDP + H(+). Its pathway is protein modification; protein glycosylation. In terms of biological role, glycosyltransferase that mediates core 2 O-glycan branching, an important step in mucin-type biosynthesis. The chain is Beta-1,3-galactosyl-O-glycosyl-glycoprotein beta-1,6-N-acetylglucosaminyltransferase 4 (gcnt4) from Danio rerio (Zebrafish).